A 512-amino-acid polypeptide reads, in one-letter code: ATP synthase subunit alpha (512 aa).

169–176 (GDRQTGKT) serves as a coordination point for ATP.

The protein belongs to the ATPase alpha/beta chains family. F-type ATPases have 2 components, CF(1) - the catalytic core - and CF(0) - the membrane proton channel. CF(1) has five subunits: alpha(3), beta(3), gamma(1), delta(1), epsilon(1). CF(0) has three main subunits: a(1), b(2) and c(9-12). The alpha and beta chains form an alternating ring which encloses part of the gamma chain. CF(1) is attached to CF(0) by a central stalk formed by the gamma and epsilon chains, while a peripheral stalk is formed by the delta and b chains.

The protein localises to the cell membrane. It catalyses the reaction ATP + H2O + 4 H(+)(in) = ADP + phosphate + 5 H(+)(out). Produces ATP from ADP in the presence of a proton gradient across the membrane. The alpha chain is a regulatory subunit. This Elusimicrobium minutum (strain Pei191) protein is ATP synthase subunit alpha.